The following is a 695-amino-acid chain: GATA zinc finger domain-containing protein 16 (695 aa).

Disordered stretches follow at residues 82–111 (SPIL…SNNA), 134–304 (VVNS…QQDK), and 422–472 (NNQF…KMRY). Composition is skewed to low complexity over residues 87 to 111 (SQQQ…SNNA) and 140 to 149 (KTTTTNNKPP). A coiled-coil region spans residues 150–174 (KQSKRKEKERLEEEKQTVAQQQQYQ). Residues 155-165 (KEKERLEEEKQ) show a composition bias toward basic and acidic residues. The segment covering 199–209 (VSTTPYGNSQF) has biased composition (polar residues). The span at 210-298 (NNNNNNNNNN…NSNSNNNNNN (89 aa)) shows a compositional bias: low complexity. Over residues 422-433 (NNQFSGDKQSAL) the composition is skewed to polar residues. The segment covering 434-446 (NNVKNSKGGNTNN) has biased composition (low complexity). The GATA-type zinc-finger motif lies at 479-504 (CHTCGVTNTPEWRRGPNGAKTLCNAC). The segment at 523-646 (NSTGVNITEP…TTNSITTPTT (124 aa)) is disordered. Low complexity-rich tracts occupy residues 544–556 (DNNN…SDSN) and 564–646 (GSNN…TPTT).

The polypeptide is GATA zinc finger domain-containing protein 16 (gtaP) (Dictyostelium discoideum (Social amoeba)).